Reading from the N-terminus, the 212-residue chain is Peptide methionine sulfoxide reductase MsrA (212 aa).

Cysteine 52 is a catalytic residue.

It belongs to the MsrA Met sulfoxide reductase family.

It catalyses the reaction L-methionyl-[protein] + [thioredoxin]-disulfide + H2O = L-methionyl-(S)-S-oxide-[protein] + [thioredoxin]-dithiol. The catalysed reaction is [thioredoxin]-disulfide + L-methionine + H2O = L-methionine (S)-S-oxide + [thioredoxin]-dithiol. Functionally, has an important function as a repair enzyme for proteins that have been inactivated by oxidation. Catalyzes the reversible oxidation-reduction of methionine sulfoxide in proteins to methionine. The chain is Peptide methionine sulfoxide reductase MsrA from Salmonella choleraesuis (strain SC-B67).